We begin with the raw amino-acid sequence, 605 residues long: Alanine--tRNA ligase (605 aa).

Residues His463, His467, Cys565, and His569 each coordinate Zn(2+).

The protein belongs to the class-II aminoacyl-tRNA synthetase family. It depends on Zn(2+) as a cofactor.

It localises to the cytoplasm. It carries out the reaction tRNA(Ala) + L-alanine + ATP = L-alanyl-tRNA(Ala) + AMP + diphosphate. Catalyzes the attachment of alanine to tRNA(Ala) in a two-step reaction: alanine is first activated by ATP to form Ala-AMP and then transferred to the acceptor end of tRNA(Ala). Also edits incorrectly charged Ser-tRNA(Ala) and Gly-tRNA(Ala) via its editing domain. The protein is Alanine--tRNA ligase (alaS) of Treponema pallidum (strain Nichols).